The following is a 442-amino-acid chain: DDB1- and CUL4-associated factor 12-B (442 aa).

Residues 1-13 (MTRRPVSRKRRAT) are compositionally biased toward basic residues. The interval 1–31 (MTRRPVSRKRRATHGTGPGEQSDWDHSAHKR) is disordered. 4 WD repeats span residues 132–173 (SHQS…PVCV), 177–215 (GHND…VNKR), 245–284 (PVNC…SKLL), and 333–370 (EQGS…FLED).

It belongs to the WD repeat DCAF12 family. In terms of assembly, component of the DCX(DCAF12) E3 ubiquitin ligase complex, at least composed of cul4 (cul4a or cul4b), ddb1, dcaf12 and rbx1.

Its subcellular location is the cytoplasm. The protein localises to the cytoskeleton. The protein resides in the microtubule organizing center. It localises to the centrosome. It is found in the nucleus. It functions in the pathway protein modification; protein ubiquitination. Its function is as follows. Substrate-recognition component of a DCX (DDB1-CUL4-X-box) E3 ubiquitin-protein ligase complex of the DesCEND (destruction via C-end degrons) pathway, which recognizes a C-degron located at the extreme C terminus of target proteins, leading to their ubiquitination and degradation. The C-degron recognized by the DesCEND pathway is usually a motif of less than ten residues and can be present in full-length proteins, truncated proteins or proteolytically cleaved forms. The DCX(DCAF12) complex specifically recognizes proteins with a diglutamate (Glu-Glu) at the C-terminus leading to their ubiquitination and degradation. Also directly recognizes the C-terminal glutamate-leucine (Glu-Leu) degron as an alternative degron in proteins leading to their ubiquitination and degradation. The sequence is that of DDB1- and CUL4-associated factor 12-B (dcaf12-b) from Xenopus laevis (African clawed frog).